A 332-amino-acid polypeptide reads, in one-letter code: Putative peptide import ATP-binding protein BMEII0206 (332 aa).

Positions 11-261 (LEVSNLSVDF…PLHPYTEGLL (251 aa)) constitute an ABC transporter domain. An ATP-binding site is contributed by 47–54 (GESGSGKS).

It belongs to the ABC transporter superfamily. As to quaternary structure, the complex is composed of two ATP-binding proteins (BMEII0205 and BMEII0206), two transmembrane proteins (BMEII0207/BMEII0208 and BMEII0209) and a solute-binding protein (BMEII0210).

Its subcellular location is the cell inner membrane. Functionally, probably part of an ABC transporter complex that could be involved in peptide import. Probably responsible for energy coupling to the transport system. The polypeptide is Putative peptide import ATP-binding protein BMEII0206 (Brucella melitensis biotype 1 (strain ATCC 23456 / CCUG 17765 / NCTC 10094 / 16M)).